Reading from the N-terminus, the 553-residue chain is Putative transport protein Ent638_0015 (553 aa).

A run of 5 helical transmembrane segments spans residues 4–24 (IALT…IGNI), 28–48 (GVGL…HFAE), 65–85 (FGLI…FFAS), 95–115 (LFAL…HKLF), and 158–178 (MSYA…MWLV). RCK C-terminal domains are found at residues 191–276 (KKHE…VIGQ) and 279–361 (ETSL…MVGN). The next 6 helical transmembrane spans lie at 371 to 391 (MLPV…PLYV), 403 to 425 (AGGP…LYWF), 439 to 459 (IVLF…DTLA), 464 to 484 (ISWI…IGIL), 493 to 513 (YLTL…LAFA), and 533 to 553 (LVMF…WGMG).

The protein belongs to the AAE transporter (TC 2.A.81) family. YidE subfamily.

It is found in the cell membrane. The chain is Putative transport protein Ent638_0015 from Enterobacter sp. (strain 638).